The chain runs to 135 residues: Retinol-binding protein 5 (135 aa).

The protein belongs to the calycin superfamily. Fatty-acid binding protein (FABP) family.

It localises to the cytoplasm. Its function is as follows. Intracellular transport of retinol. The protein is Retinol-binding protein 5 (RBP5) of Pongo abelii (Sumatran orangutan).